Here is a 64-residue protein sequence, read N- to C-terminus: Large ribosomal subunit protein uL29 (64 aa).

It belongs to the universal ribosomal protein uL29 family.

This chain is Large ribosomal subunit protein uL29, found in Burkholderia ambifaria (strain MC40-6).